Here is a 513-residue protein sequence, read N- to C-terminus: Histidine ammonia-lyase (513 aa).

The segment at residues 146 to 148 (ASG) is a cross-link (5-imidazolinone (Ala-Gly)). Position 147 is a 2,3-didehydroalanine (Ser) (serine 147).

It belongs to the PAL/histidase family. In terms of processing, contains an active site 4-methylidene-imidazol-5-one (MIO), which is formed autocatalytically by cyclization and dehydration of residues Ala-Ser-Gly.

It is found in the cytoplasm. It catalyses the reaction L-histidine = trans-urocanate + NH4(+). The protein operates within amino-acid degradation; L-histidine degradation into L-glutamate; N-formimidoyl-L-glutamate from L-histidine: step 1/3. The chain is Histidine ammonia-lyase from Shewanella oneidensis (strain ATCC 700550 / JCM 31522 / CIP 106686 / LMG 19005 / NCIMB 14063 / MR-1).